The following is a 691-amino-acid chain: L-type lectin-domain containing receptor kinase S.6 (691 aa).

Residues 1 to 25 form the signal peptide; it reads MNHHHYSLVIFHLILFLSLDFPTLS. Over 26-311 the chain is Extracellular; sequence HRFSPPLQNL…VVGLKIPVWS (286 aa). The tract at residues 27-257 is legume-lectin like; it reads RFSPPLQNLT…LHIVERWKFR (231 aa). 2 N-linked (GlcNAc...) asparagine glycosylation sites follow: Asn34 and Asn89. A helical transmembrane segment spans residues 312–332; sequence LLPGLAAIVILVAFIVFSLIC. The Cytoplasmic portion of the chain corresponds to 333-691; the sequence is GKKRISEEAD…PWMTPKSHFS (359 aa). Residues 366 to 653 form the Protein kinase domain; the sequence is FNENAIVGQG…IRGEAPLPVL (288 aa). ATP is bound by residues 372-380 and Lys394; that span reads VGQGASATV. The Proton acceptor role is filled by Asp500.

The protein in the C-terminal section; belongs to the protein kinase superfamily. Ser/Thr protein kinase family. It in the N-terminal section; belongs to the leguminous lectin family.

It is found in the cell membrane. It carries out the reaction L-seryl-[protein] + ATP = O-phospho-L-seryl-[protein] + ADP + H(+). The enzyme catalyses L-threonyl-[protein] + ATP = O-phospho-L-threonyl-[protein] + ADP + H(+). In terms of biological role, involved in resistance response to the pathogenic oomycetes Phytophthora infestans and Phytophthora capsici and to the pathogenic bacteria Pseudomonas syringae. This Arabidopsis thaliana (Mouse-ear cress) protein is L-type lectin-domain containing receptor kinase S.6.